Consider the following 358-residue polypeptide: Alanine racemase (358 aa).

The active-site Proton acceptor; specific for D-alanine is the K35. An N6-(pyridoxal phosphate)lysine modification is found at K35. R130 is a substrate binding site. The Proton acceptor; specific for L-alanine role is filled by Y255. M303 contacts substrate.

This sequence belongs to the alanine racemase family. It depends on pyridoxal 5'-phosphate as a cofactor.

It carries out the reaction L-alanine = D-alanine. It functions in the pathway amino-acid biosynthesis; D-alanine biosynthesis; D-alanine from L-alanine: step 1/1. Functionally, catalyzes the interconversion of L-alanine and D-alanine. May also act on other amino acids. This chain is Alanine racemase (alr), found in Shewanella sp. (strain MR-4).